Here is a 1511-residue protein sequence, read N- to C-terminus: Pleiotropic ABC efflux transporter of multiple drugs (1511 aa).

Residues 1–14 (MPEAKLNNNVNDVT) show a composition bias toward polar residues. Residues 1–32 (MPEAKLNNNVNDVTSYSSASSSTENAADLHNY) form a disordered region. Topologically, residues 1–517 (MPEAKLNNNV…LLIRNMWRLR (517 aa)) are cytoplasmic. Phosphoserine is present on S22. A phosphothreonine mark is found at T49 and T51. Residues 52–71 (AQSMQNSTQSAPNKSDAQSI) form a disordered region. S54, S58, and S61 each carry phosphoserine. The ABC transporter 1 domain occupies 161 to 410 (LRKFQRSKET…FEDMGYVCPS (250 aa)). The helical transmembrane segment at 518 to 542 (NNIGFTLFMILGNCSMALILGSMFF) threads the bilayer. Residues 543–558 (KIMKKGDTSTFYFRGS) are Extracellular-facing. Residues 559-579 (AMFFAILFNAFSSLLEIFSLY) form a helical membrane-spanning segment. Residues 580 to 611 (EARPITEKHRTYSLYHPSADAFASVLSEIPSK) lie on the Cytoplasmic side of the membrane. A helical transmembrane segment spans residues 612–628 (LIIAVCFNIIFYFLVDF). Residues 629–631 (RRN) lie on the Extracellular side of the membrane. The chain crosses the membrane as a helical span at residues 632 to 650 (GGVFFFYLLINIVAVFSMS). Topologically, residues 651–665 (HLFRCVGSLTKTLSE) are cytoplasmic. A helical transmembrane segment spans residues 666–685 (AMVPASMLLLALSMYTGFAI). The Extracellular segment spans residues 686–774 (PKKKILRWSK…QYYHKDKWRG (89 aa)). N734 carries N-linked (GlcNAc...) asparagine glycosylation. Residues 775 to 793 (FGIGMAYVVFFFFVYLFLC) form a helical membrane-spanning segment. Topologically, residues 794–1237 (EYNEGAKQKG…GTSLQGLQNQ (444 aa)) are cytoplasmic. The disordered stretch occupies residues 824-858 (EKNANDPENVGERSDLSSDRKMLQESSEEESDTYG). K825 is covalently cross-linked (Glycyl lysine isopeptide (Lys-Gly) (interchain with G-Cter in ubiquitin)). The segment covering 833–846 (VGERSDLSSDRKML) has biased composition (basic and acidic residues). Phosphoserine occurs at positions 837, 840, 841, 849, 850, and 854. Residues 869 to 1112 (FHWRNLCYEV…MIDYFESHGA (244 aa)) enclose the ABC transporter 2 domain. Residue 905–912 (GASGAGKT) participates in ATP binding. The chain crosses the membrane as a helical span at residues 1238 to 1260 (MLAVFMFTVIFNPILQQYLPSFV). Residues 1261 to 1291 (QQRDLYEARERPSRTFSWISFIFAQIFVEVP) are Extracellular-facing. A helical membrane pass occupies residues 1292–1313 (WNILAGTIAYFIYYYPIGFYSN). Topologically, residues 1314 to 1324 (ASAAGQLHERG) are cytoplasmic. The helical transmembrane segment at 1325–1349 (ALFWLFSCAFYVYVGSMGLLVISFN) threads the bilayer. The Extracellular segment spans residues 1350 to 1354 (QVAES). The helical transmembrane segment at 1355–1379 (AANLASLLFTMSLSFCGVMTTPSAM) threads the bilayer. The Cytoplasmic segment spans residues 1380-1388 (PRFWIFMYR). A helical transmembrane segment spans residues 1389 to 1407 (VSPLTYFIQALLAVGVANV). At 1408 to 1476 (DVKCADYELL…VNSFYSERWR (69 aa)) the chain is on the extracellular side. The N-linked (GlcNAc...) asparagine glycan is linked to N1447. Residues 1477–1499 (NYGIFICYIAFNYIAGVFFYWLA) form a helical membrane-spanning segment. Over 1500-1511 (RVPKKNGKLSKK) the chain is Cytoplasmic.

Belongs to the ABC transporter superfamily. ABCG family. PDR (TC 3.A.1.205) subfamily. Ubiquitinylation mediates endocytosis and vacuolar degradation. Phosphorylation by casein kinase I stabilizes the protein half-life.

Its subcellular location is the cell membrane. FK506, isonitrile, enniatin, RU49953, kitasatospora E420, staurosporine CGP42700, prenyl-flavonoids, D-octapeptides were found to be inhibitors in vivo. Vanadate and oligomycin were found to be inhibitors in vitro. Functionally, active efflux of weakly charged organic compounds of 90 cubic Angstroms to 300 cubic Angstroms surface volume. Confers resistance to numerous chemicals including cycloheximide, sulfomethuron methyl, steroids, antiseptics, antibiotics, anticancer, herbicides, mycotoxins, insecticides, ionophores, alkaloids, flavonoids, phenothiazines, organotin compounds, carbazoles, lysosomotropic aminoesters, detergents, rhodamines and other fluorophores, azoles and other antifungals. Exhibits nucleoside triphosphatase activity. The protein is Pleiotropic ABC efflux transporter of multiple drugs (PDR5) of Saccharomyces cerevisiae (strain ATCC 204508 / S288c) (Baker's yeast).